The following is a 159-amino-acid chain: MAKKPKVASNTIALNKRARHEYFIEEEIEAGLELQGWEVKSLRAGKANIGDSYVTFRNGEAFLFGATITPLNMASTHIVCDPTRTRKLLLNKRELDSLFGKVNRDGMTVVALSLYWKNAWAKVKVGVAKGKKLHDKREDIKDREWQVAKQRIMKNANRG.

It belongs to the SmpB family.

It localises to the cytoplasm. Its function is as follows. Required for rescue of stalled ribosomes mediated by trans-translation. Binds to transfer-messenger RNA (tmRNA), required for stable association of tmRNA with ribosomes. tmRNA and SmpB together mimic tRNA shape, replacing the anticodon stem-loop with SmpB. tmRNA is encoded by the ssrA gene; the 2 termini fold to resemble tRNA(Ala) and it encodes a 'tag peptide', a short internal open reading frame. During trans-translation Ala-aminoacylated tmRNA acts like a tRNA, entering the A-site of stalled ribosomes, displacing the stalled mRNA. The ribosome then switches to translate the ORF on the tmRNA; the nascent peptide is terminated with the 'tag peptide' encoded by the tmRNA and targeted for degradation. The ribosome is freed to recommence translation, which seems to be the essential function of trans-translation. The protein is SsrA-binding protein of Actinobacillus pleuropneumoniae serotype 5b (strain L20).